The sequence spans 331 residues: Holliday junction branch migration complex subunit RuvB (331 aa).

A large ATPase domain (RuvB-L) region spans residues 4–182 (KDILQSSECI…FGIPMHLEFY (179 aa)). ATP is bound by residues Arg-22, Gly-63, Lys-66, Thr-67, Thr-68, 129–131 (EDF), Arg-172, Tyr-182, and Arg-219. Thr-67 lines the Mg(2+) pocket. Residues 183 to 253 (STEELTKVIK…FADQALLRLG (71 aa)) are small ATPAse domain (RuvB-S). The segment at 256-331 (KLGLDRQDIK…SYLNEQTYNM (76 aa)) is head domain (RuvB-H). Positions 309 and 314 each coordinate DNA.

Belongs to the RuvB family. As to quaternary structure, homohexamer. Forms an RuvA(8)-RuvB(12)-Holliday junction (HJ) complex. HJ DNA is sandwiched between 2 RuvA tetramers; dsDNA enters through RuvA and exits via RuvB. An RuvB hexamer assembles on each DNA strand where it exits the tetramer. Each RuvB hexamer is contacted by two RuvA subunits (via domain III) on 2 adjacent RuvB subunits; this complex drives branch migration. In the full resolvosome a probable DNA-RuvA(4)-RuvB(12)-RuvC(2) complex forms which resolves the HJ.

The protein localises to the cytoplasm. It carries out the reaction ATP + H2O = ADP + phosphate + H(+). Functionally, the RuvA-RuvB-RuvC complex processes Holliday junction (HJ) DNA during genetic recombination and DNA repair, while the RuvA-RuvB complex plays an important role in the rescue of blocked DNA replication forks via replication fork reversal (RFR). RuvA specifically binds to HJ cruciform DNA, conferring on it an open structure. The RuvB hexamer acts as an ATP-dependent pump, pulling dsDNA into and through the RuvAB complex. RuvB forms 2 homohexamers on either side of HJ DNA bound by 1 or 2 RuvA tetramers; 4 subunits per hexamer contact DNA at a time. Coordinated motions by a converter formed by DNA-disengaged RuvB subunits stimulates ATP hydrolysis and nucleotide exchange. Immobilization of the converter enables RuvB to convert the ATP-contained energy into a lever motion, pulling 2 nucleotides of DNA out of the RuvA tetramer per ATP hydrolyzed, thus driving DNA branch migration. The RuvB motors rotate together with the DNA substrate, which together with the progressing nucleotide cycle form the mechanistic basis for DNA recombination by continuous HJ branch migration. Branch migration allows RuvC to scan DNA until it finds its consensus sequence, where it cleaves and resolves cruciform DNA. In Ehrlichia ruminantium (strain Gardel), this protein is Holliday junction branch migration complex subunit RuvB.